Reading from the N-terminus, the 409-residue chain is N-carbamoyl-L-amino acid amidohydrolase (409 aa).

4 residues coordinate a divalent metal cation: H79, D90, E125, and H189. Residues Q192, H225, N273, R286, and A355 each contribute to the an N-carbamoyl-L-alpha-amino acid site. Residues 208–325 form an involved in dimerization region; sequence GIAGLIWVKF…TTERLQEMAP (118 aa). A divalent metal cation is bound at residue H380.

Belongs to the peptidase M20 family. As to quaternary structure, homodimer. Mn(2+) is required as a cofactor. It depends on Ni(2+) as a cofactor. The cofactor is Co(2+). Fe(2+) serves as cofactor.

The catalysed reaction is an N-carbamoyl-L-alpha-amino acid + H2O + 2 H(+) = an L-alpha-amino acid + NH4(+) + CO2. It carries out the reaction N-carbamoyl-L-methionine + H2O + 2 H(+) = L-methionine + NH4(+) + CO2. It catalyses the reaction N-acetyl-L-methionine + H2O = L-methionine + acetate. The enzyme catalyses N-carbamoyl-L-alanine + H2O + 2 H(+) = L-alanine + NH4(+) + CO2. The catalysed reaction is N-carbamoyl-L-glutamate + H2O + 2 H(+) = L-glutamate + NH4(+) + CO2. It carries out the reaction N-carbamoylglycine + H2O + 2 H(+) = glycine + NH4(+) + CO2. It catalyses the reaction N-carbamoyl-L-leucine + H2O + 2 H(+) = L-leucine + NH4(+) + CO2. Its function is as follows. Catalyzes the hydrolysis of aliphatic N-carbamoyl-L-alpha-amino acids to free L-alpha-amino acids. Is strictly L-specific since it is inactive toward N-carbamoyl-D-alpha-amino acids. Is not able to use aromatic N-carbamoyl-L-alpha-amino acids like N-carbamoyl-L-tryptophan and N-carbamoyl-L-phenylalanine as substrates, but is also able to hydrolyze N-acetyl-L-methionine. In Geobacillus stearothermophilus (Bacillus stearothermophilus), this protein is N-carbamoyl-L-amino acid amidohydrolase.